Consider the following 147-residue polypeptide: Catabolic 3-dehydroquinase 2 (147 aa).

Catalysis depends on Tyr-23, which acts as the Proton acceptor. Residues Asn-74, His-80, and Asp-87 each coordinate substrate. The active-site Proton donor is His-100. Substrate-binding positions include 101–102 (IT) and Arg-111.

The protein belongs to the type-II 3-dehydroquinase family. In terms of assembly, homododecamer. Adopts a ring-like structure, composed of an arrangement of two hexameric rings stacked on top of one another.

The enzyme catalyses 3-dehydroquinate = 3-dehydroshikimate + H2O. Its pathway is aromatic compound metabolism; 3,4-dihydroxybenzoate biosynthesis; 3,4-dihydroxybenzoate from 3-dehydroquinate: step 1/2. Functionally, is involved in the catabolism of quinate. Allows the utilization of quinate as carbon source via the beta-ketoadipate pathway. The protein is Catabolic 3-dehydroquinase 2 of Aspergillus terreus (strain NIH 2624 / FGSC A1156).